Here is a 2325-residue protein sequence, read N- to C-terminus: Serine/threonine-protein kinase MEC1 (2325 aa).

Residues 1363–1886 (LLTTRSAECD…VWYIFSHARS (524 aa)) enclose the FAT domain. The PI3K/PI4K catalytic domain maps to 1993–2309 (FDDNVNIFFS…QVDVLIQEAT (317 aa)). The tract at residues 1999–2005 (IFFSLQM) is G-loop. Residues 2174 to 2182 (GLGDRHCEN) form a catalytic loop region. The activation loop stretch occupies residues 2194–2218 (HIDFDCLFEKGTTLPTPEIVPFRLT). The FATC domain occupies 2293 to 2325 (LPMNIHGQVDVLIQEATSLERLSQMYAGWAAYM).

This sequence belongs to the PI3/PI4-kinase family. ATM subfamily.

The protein resides in the nucleus. It carries out the reaction L-seryl-[protein] + ATP = O-phospho-L-seryl-[protein] + ADP + H(+). The catalysed reaction is L-threonyl-[protein] + ATP = O-phospho-L-threonyl-[protein] + ADP + H(+). Its function is as follows. Serine/threonine protein kinase which activates checkpoint signaling upon genotoxic stresses such as ionizing radiation (IR), ultraviolet light (UV), or DNA replication stalling, thereby acting as a DNA damage sensor. Recognizes the substrate consensus sequence [ST]-Q. Recruited to DNA lesions in order to initiate the DNA repair by homologous recombination. Phosphorylates histone H2A to form H2AS128ph (gamma-H2A) at sites of DNA damage, also involved in the regulation of DNA damage response mechanism. Required for cell growth and meiotic recombination. The chain is Serine/threonine-protein kinase MEC1 (MEC1) from Candida albicans (strain SC5314 / ATCC MYA-2876) (Yeast).